Here is a 200-residue protein sequence, read N- to C-terminus: Small ribosomal subunit protein uS4 (200 aa).

The 64-residue stretch at 92-155 (SRLDAVVYSL…QKLNIIVESV (64 aa)) folds into the S4 RNA-binding domain.

The protein belongs to the universal ribosomal protein uS4 family. Part of the 30S ribosomal subunit. Contacts protein S5. The interaction surface between S4 and S5 is involved in control of translational fidelity.

One of the primary rRNA binding proteins, it binds directly to 16S rRNA where it nucleates assembly of the body of the 30S subunit. Functionally, with S5 and S12 plays an important role in translational accuracy. The chain is Small ribosomal subunit protein uS4 from Staphylococcus aureus (strain JH9).